A 769-amino-acid polypeptide reads, in one-letter code: Post-GPI attachment to proteins factor 6 (769 aa).

Residues 1-33 form the signal peptide; sequence MGRVGAGGTAREAATGSLLLLLLLLARPPPAAA. The Extracellular segment spans residues 34 to 543; it reads SNSKESEAGL…STAQTVAQQR (510 aa). Residues N138 and N411 are each glycosylated (N-linked (GlcNAc...) asparagine). Positions 495 to 531 constitute an EGF-like domain; that stretch reads PCLNDCGPYGQCLLLRRYGYVYAGCSCKAGWRGWSCT. Disulfide bonds link C496/C506, C500/C519, and C521/C530. Residues 544 to 564 traverse the membrane as a helical segment; sequence AAALLLTLSNLMFLAPIAISL. The Cytoplasmic segment spans residues 565 to 567; it reads HRS. A helical transmembrane segment spans residues 568 to 588; that stretch reads FLVEASVYFYTMFFSTFYHAC. Residues 589–603 lie on the Extracellular side of the membrane; that stretch reads DQPGEAVLCILSYDT. A helical transmembrane segment spans residues 604–624; that stretch reads LQYCDFLGSGASTWVTILCMA. Topologically, residues 625–627 are cytoplasmic; the sequence is RLK. A helical membrane pass occupies residues 628–648; the sequence is TILKQVLLVLGTLVIAMSLQM. The Extracellular segment spans residues 649 to 651; the sequence is DRR. The helical transmembrane segment at 652–672 threads the bilayer; that stretch reads GIWNLMGPCVFAFVIMASMWI. The Cytoplasmic portion of the chain corresponds to 673-688; that stretch reads YRCGHRGQCYPTSWQR. Residues 689 to 709 form a helical membrane-spanning segment; that stretch reads WVFYLLPGISMASVGIAMYTS. Residues 710–715 are Extracellular-facing; it reads MMTSDN. The helical transmembrane segment at 716–736 threads the bilayer; the sequence is YYYTHSIWHILLAGSAAFLLP. Residues 737–769 lie on the Cytoplasmic side of the membrane; that stretch reads PREEKAGSWACLQKFPCHYQICRNDRDELYTVT.

This sequence belongs to the TMEM8 family. Glycosylated.

It localises to the cell membrane. The protein localises to the lysosome membrane. It catalyses the reaction a 1,2-diacyl-sn-glycero-3-phosphocholine + H2O = a 1-acyl-sn-glycero-3-phosphocholine + a fatty acid + H(+). Functionally, involved in the lipid remodeling steps of GPI-anchor maturation. Lipid remodeling steps consist in the generation of 2 saturated fatty chains at the sn-2 position of GPI-anchor proteins (GPI-AP). Has phospholipase A2 activity that removes an acyl-chain at the sn-2 position of GPI-anchors during the remodeling of GPI. Required for the shedding of the GPI-AP CRIPTO, but not CFC1, at the cell surface. Shedding of CRIPTO modulates Nodal signaling by allowing soluble CRIPTO to act as a Nodal coreceptor on other cells. Also indirectly involved in the translocation of RAC1 from the cytosol to the plasma membrane by maintaining the steady state amount of CAV1-enriched plasma membrane subdomains, stabilizing RAC1 at the plasma membrane. In Mus musculus (Mouse), this protein is Post-GPI attachment to proteins factor 6.